Here is a 248-residue protein sequence, read N- to C-terminus: Ribosomal RNA small subunit methyltransferase J (248 aa).

Residues 98–99, 114–115, 150–151, and aspartate 168 contribute to the S-adenosyl-L-methionine site; these read RD, ER, and SS.

The protein belongs to the methyltransferase superfamily. RsmJ family.

The protein resides in the cytoplasm. It catalyses the reaction guanosine(1516) in 16S rRNA + S-adenosyl-L-methionine = N(2)-methylguanosine(1516) in 16S rRNA + S-adenosyl-L-homocysteine + H(+). In terms of biological role, specifically methylates the guanosine in position 1516 of 16S rRNA. This chain is Ribosomal RNA small subunit methyltransferase J, found in Shewanella baltica (strain OS185).